The chain runs to 958 residues: Probable protein phosphatase DDB_G0282105 (958 aa).

2 consecutive transmembrane segments (helical) span residues 2–22 (VLMMDIKIMSAFSILFLSLMV) and 26–46 (FLEFLANTVYAAILFIIILFF). The stretch at 142-330 (SASQQSELTN…KDKERERSSS (189 aa)) forms a coiled coil. A compositionally biased stretch (basic and acidic residues) spans 312-328 (QEKEKQKLEKDKERERS). 5 disordered regions span residues 312–361 (QEKE…PIPI), 380–421 (SVNG…PKFK), 445–475 (HLGSDFFTPANTTTSTTTTTSTTSTSTTTPI), 491–525 (ITSPTTNTTNDILSSSSSSSSSSSSLLTTNAILSP), and 619–659 (NNNN…NDNK). Composition is skewed to low complexity over residues 329 to 361 (SSFSSDISSSSTTSTTASTFLSSSPSKSIPIPI), 390 to 401 (SSVSPPSSSYLR), 452 to 475 (TPANTTTSTTTTTSTTSTSTTTPI), 491 to 515 (ITSPTTNTTNDILSSSSSSSSSSSS), and 619 to 655 (NNNNKNNIEESNNNNNNNNNNNNNNNNNNNNNNNNNK). The stretch at 613–666 (NFLKTNNNNNKNNIEESNNNNNNNNNNNNNNNNNNNNNNNNNKNDNKEVNSKLE) forms a coiled coil. Residues 675–958 (KIGLRRAKKK…DNVTVIIVKL (284 aa)) form the PPM-type phosphatase domain. The Mn(2+) site is built by Asp722, Gly723, Asp905, and Asp949.

This sequence in the C-terminal section; belongs to the PP2C family. Mg(2+) serves as cofactor. Mn(2+) is required as a cofactor.

It is found in the membrane. It catalyses the reaction O-phospho-L-seryl-[protein] + H2O = L-seryl-[protein] + phosphate. The catalysed reaction is O-phospho-L-threonyl-[protein] + H2O = L-threonyl-[protein] + phosphate. The protein is Probable protein phosphatase DDB_G0282105 of Dictyostelium discoideum (Social amoeba).